Reading from the N-terminus, the 320-residue chain is GPI-specific phospholipase A2-like PGAP3 (320 aa).

The first 20 residues, 1–20, serve as a signal peptide directing secretion; sequence MAERTARLLLLTVTVGLAWG. Over 21–98 the chain is Lumenal; sequence SQGDREPVYR…QFHGKWPFSR (78 aa). N-linked (GlcNAc...) asparagine glycosylation is present at Asn40. Residues 99–119 traverse the membrane as a helical segment; the sequence is FLFIQEPASAVASLLNGLASL. Over 120–135 the chain is Cytoplasmic; the sequence is VMLCRYRASVPASSPM. A helical transmembrane segment spans residues 136 to 156; that stretch reads YHTCMAFAWVSLNAWFWSTVF. Over 157–169 the chain is Lumenal; sequence HTRDTDLTEKMDY. Residues 170-190 traverse the membrane as a helical segment; it reads FCASAVILHSIYLCCVRTVGL. Topologically, residues 191 to 198 are cytoplasmic; the sequence is QHPSVARA. Residues 199-219 traverse the membrane as a helical segment; sequence FGATLLLMLLLHTSYLSLVRF. At 220-223 the chain is on the lumenal side; it reads DYSY. The chain crosses the membrane as a helical span at residues 224–244; sequence NMMANVAIGLVNLAWWLAWCL. Over 245–258 the chain is Cytoplasmic; sequence RNHRRLPHTRKCVA. The helical transmembrane segment at 259–279 threads the bilayer; it reads VVLLLQGLSLLELLDFPPLFW. Over 280–282 the chain is Lumenal; sequence VLD. A helical transmembrane segment spans residues 283–303; that stretch reads AHAIWHISTIPVHVLFFRFLE. Residues 304-320 lie on the Cytoplasmic side of the membrane; sequence DDSLYLLKESEAKFKLD.

Belongs to the PGAP3 family.

It localises to the golgi apparatus membrane. Its function is as follows. Involved in the fatty acid remodeling steps of GPI-anchor maturation where the unsaturated acyl chain at sn-2 of inositol phosphate is replaced by a saturated stearoyl chain. May catalyze the first step of the fatty acid remodeling, by removing the unsaturated acyl chain at sn-2 of inositol phosphate, generating a lyso-GPI intermediate. The fatty acid remodeling steps is critical for the integration of GPI-APs into lipid rafts. The protein is GPI-specific phospholipase A2-like PGAP3 (PGAP3) of Cricetulus griseus (Chinese hamster).